The sequence spans 65 residues: Large ribosomal subunit protein bL35 (65 aa).

Residues 1–26 are disordered; that stretch reads MPKIKTLRGAAKRFKKTASGGFKRKQ. The segment covering 10 to 26 has biased composition (basic residues); sequence AAKRFKKTASGGFKRKQ.

The protein belongs to the bacterial ribosomal protein bL35 family.

The chain is Large ribosomal subunit protein bL35 from Histophilus somni (strain 2336) (Haemophilus somnus).